A 437-amino-acid chain; its full sequence is Putrescine hydroxycinnamoyltransferase 3 (437 aa).

Catalysis depends on proton acceptor residues His-151 and Asp-383.

This sequence belongs to the plant acyltransferase family. As to expression, highly expressed in roots. Expressed at low levels in shoots and flowers.

Hydroxycinnamoyl transferase that catalyzes the transfer of an acyl from p-coumaryol-CoA to putrescine, to produce coumaroyl putrescine. Can use feruloyl-CoA and caffeoyl-CoA as acyl donors. The polypeptide is Putrescine hydroxycinnamoyltransferase 3 (Oryza sativa subsp. japonica (Rice)).